The following is a 304-amino-acid chain: Olfactory receptor 8G2 (304 aa).

Topologically, residues 1–41 (MVFLSSVETDQRKMSAGNHSSVTEFILAGLSEQPELQLRLF) are extracellular. Residue N18 is glycosylated (N-linked (GlcNAc...) asparagine). A helical transmembrane segment spans residues 42 to 62 (LLFLGIYVVTVVGNLSMITLI). Residues 63-69 (GLSSHLH) lie on the Cytoplasmic side of the membrane. A helical membrane pass occupies residues 70–90 (TPMYYFLSGLSFIDLCHSTII). Topologically, residues 91-110 (TPKMLVNFVTEKNIISYPEC) are extracellular. C110 and C192 are joined by a disulfide. Residues 111–130 (MTQLYFFLIFAIAECHMLAV) traverse the membrane as a helical segment. At 131 to 154 (TAYDRYVAICSPLLYNVIMSYHHC) the chain is on the cytoplasmic side. A helical membrane pass occupies residues 155-175 (FWLTVGVYVLGILGSTIHTGF). At 176–193 (MLRLFLCKTNVINHYFCD) the chain is on the extracellular side. A helical membrane pass occupies residues 194–214 (LFPLLGLSCSSTYINELLVLV). Residues 215–217 (LSA) lie on the Cytoplasmic side of the membrane. A helical transmembrane segment spans residues 218–238 (FNILTPALTILASYIFIIASI). Residues 239 to 257 (LRIRSTEGRSKAFSTCSSH) are Extracellular-facing. A helical transmembrane segment spans residues 258–278 (ILAVAVFFGSAAFMYLQPSSV). Over 279–304 (SSMDQRKVSSVFYTTIVPMLNPQSIA) the chain is Cytoplasmic.

Belongs to the G-protein coupled receptor 1 family.

The protein localises to the cell membrane. Its function is as follows. Odorant receptor. This Homo sapiens (Human) protein is Olfactory receptor 8G2.